Consider the following 194-residue polypeptide: MDRIAIVDLGIGNLANVKKALKGYITSDPYEIEKADKIVLPGVGNFGAVVDKLAPIKDIIIEGINEGKPFLGICLGMQLLFEESEESPGKEGLGIFKGKVVKLKNVRTPHIGWNQVWIKKECKLFEGLKNGSYFYFVHSYHAVPQDPDIIATTTDYENAEFVSSVCFENIFGVQFHPEKSSKNGLILLRNFRRL.

In terms of domain architecture, Glutamine amidotransferase type-1 spans 3-194 (RIAIVDLGIG…LILLRNFRRL (192 aa)). Catalysis depends on C74, which acts as the Nucleophile. Residues H176 and E178 contribute to the active site.

Heterodimer of HisH and HisF.

The protein localises to the cytoplasm. The enzyme catalyses 5-[(5-phospho-1-deoxy-D-ribulos-1-ylimino)methylamino]-1-(5-phospho-beta-D-ribosyl)imidazole-4-carboxamide + L-glutamine = D-erythro-1-(imidazol-4-yl)glycerol 3-phosphate + 5-amino-1-(5-phospho-beta-D-ribosyl)imidazole-4-carboxamide + L-glutamate + H(+). It catalyses the reaction L-glutamine + H2O = L-glutamate + NH4(+). It functions in the pathway amino-acid biosynthesis; L-histidine biosynthesis; L-histidine from 5-phospho-alpha-D-ribose 1-diphosphate: step 5/9. Its function is as follows. IGPS catalyzes the conversion of PRFAR and glutamine to IGP, AICAR and glutamate. The HisH subunit catalyzes the hydrolysis of glutamine to glutamate and ammonia as part of the synthesis of IGP and AICAR. The resulting ammonia molecule is channeled to the active site of HisF. The polypeptide is Imidazole glycerol phosphate synthase subunit HisH (Pyrococcus furiosus (strain ATCC 43587 / DSM 3638 / JCM 8422 / Vc1)).